Here is a 1019-residue protein sequence, read N- to C-terminus: Pleckstrin homology domain-containing family M member 2 (1019 aa).

The residue at position 1 (Met-1) is an N-acetylmethionine. Residues 1 to 310 are interaction with KIF5B; the sequence is MEPGEVKDRI…LDPPDACTEL (310 aa). The 123-residue stretch at 36–158 folds into the RUN domain; that stretch reads RNHDKVLQRL…IRFELDLDAP (123 aa). Disordered regions lie at residues 230-458, 471-525, and 557-581; these read SVPS…SEGL, SPST…REAQ, and QPSPCLSSAEDSGVDEGQGSPSEMV. Composition is skewed to polar residues over residues 243-272 and 279-291; these read DTVSGPRSTASDLTSSKASTRSPTQRQNPF and TVSSSDTTPVHTT. Basic residues predominate over residues 315 to 327; sequence VTKKKKIGKKKKS. The span at 417-427 shows a compositional bias: polar residues; the sequence is LNGQLDPSTWC. Ser-441 is modified (phosphoserine). Residues 516-525 are compositionally biased toward basic and acidic residues; the sequence is PLEDTTREAQ. The interval 762 to 885 is interaction with sifA; the sequence is PCHCSPPEGT…VIPQGVAPSP (124 aa). The PH domain maps to 771–873; sequence TITKEGMLHY…WMQHLCQAVS (103 aa).

Interacts with KLC2 (via TPR repeats). Interacts with KIF5B. Interacts with BORCS5. Interacts (via RUN domain) with ARL8B (GTP-bound form); PLEKHM1 and PLEKHM2 compete for interaction with ARL8B. Interacts with ARL8A. As to quaternary structure, (Microbial infection) Interacts with the S.typhimurium sifA protein; required for S.typhimurium infection.

It is found in the cytoplasm. Its subcellular location is the lysosome membrane. Its function is as follows. Plays a role in lysosomes movement and localization at the cell periphery acting as an effector of ARL8B. Required for ARL8B to exert its effects on lysosome location, recruits kinesin-1 to lysosomes and hence direct their movement toward microtubule plus ends. Binding to ARL8B provides a link from lysosomal membranes to plus-end-directed motility. Critical factor involved in NK cell-mediated cytotoxicity. Drives the polarization of cytolytic granules and microtubule-organizing centers (MTOCs) toward the immune synapse between effector NK lymphocytes and target cells. Required for maintenance of the Golgi apparatus organization. May play a role in membrane tubulation. This chain is Pleckstrin homology domain-containing family M member 2, found in Homo sapiens (Human).